The primary structure comprises 501 residues: Bifunctional purine biosynthesis protein PurH (501 aa).

The region spanning 1–144 (MKKRALISVF…KNFKDVVVLS (144 aa)) is the MGS-like domain.

The protein belongs to the PurH family.

The enzyme catalyses (6R)-10-formyltetrahydrofolate + 5-amino-1-(5-phospho-beta-D-ribosyl)imidazole-4-carboxamide = 5-formamido-1-(5-phospho-D-ribosyl)imidazole-4-carboxamide + (6S)-5,6,7,8-tetrahydrofolate. It catalyses the reaction IMP + H2O = 5-formamido-1-(5-phospho-D-ribosyl)imidazole-4-carboxamide. It functions in the pathway purine metabolism; IMP biosynthesis via de novo pathway; 5-formamido-1-(5-phospho-D-ribosyl)imidazole-4-carboxamide from 5-amino-1-(5-phospho-D-ribosyl)imidazole-4-carboxamide (10-formyl THF route): step 1/1. Its pathway is purine metabolism; IMP biosynthesis via de novo pathway; IMP from 5-formamido-1-(5-phospho-D-ribosyl)imidazole-4-carboxamide: step 1/1. This Clostridium perfringens (strain 13 / Type A) protein is Bifunctional purine biosynthesis protein PurH.